The following is a 300-amino-acid chain: Lysenin-related protein 1 (300 aa).

The tract at residues 12–35 (EEIEVDVVSVWKEGYAYENRGNSS) is N-terminal cap domain. Positions 36 to 109 (VQQKITMTKG…SQVIEHTVTI (74 aa)) are beta-hairpin domain. Positions 110-158 (PPNKKFTRWKLNADVGGTGIEYMYLIDEVTAIGADLTIPEVNKSRAKIL) are N-terminal cap domain. Positions 159 to 299 (VGRQIHLGET…EDKWILEVVN (141 aa)) are C-terminal receptor-binding domain. An N-(acyl)-sphingosylphosphocholine is bound by residues K187, S229, Y235, and Y284. C274 and C285 are disulfide-bonded.

This sequence belongs to the lysenin family. In terms of assembly, binds to sphingomyelin as a monomer by using its C-terminal domain. Forms a nonamer when sphingomyelin/LRP-1 ratio is lower than ca 500. Oligomerization, but not binding, is influenced by the fluidity of sphingomyelin. In terms of tissue distribution, expressed by coelomocytes.

Its subcellular location is the secreted. It localises to the target cell membrane. Its function is as follows. Pore-forming toxin that specifically binds sphingomyelin in the plasma membrane of various cells. Has hemolytic activity. Binding and hemolytic activities of this toxin are 10 times less than those of lysenin and lysenin-related protein 2. This is Lysenin-related protein 1 from Eisenia fetida (Red wiggler worm).